Consider the following 102-residue polypeptide: Envelope protein US9 (102 aa).

Residues Met-1 to Tyr-75 are Intravirion-facing. Positions Leu-14 to Leu-15 match the Di-leucine internalization motif motif. Residues Glu-41–Glu-55 are acidic. Phosphoserine; by host CK2 is present on residues Ser-46 and Ser-48. A helical; Signal-anchor for type II membrane protein transmembrane segment spans residues Ile-76–Ile-96. The Virion surface segment spans residues Thr-97–Gly-102.

This sequence belongs to the alphaherpesvirinae envelope protein US9 family. Phosphorylated on serines within the acidic cluster, possibly by host CK2. Phosphorylation determines whether endocytosed viral US9 traffics to the trans-Golgi network or recycles to the cell membrane.

The protein localises to the virion membrane. It localises to the host Golgi apparatus membrane. The protein resides in the host Golgi apparatus. It is found in the host trans-Golgi network. Its subcellular location is the host cell membrane. Essential for the anterograde spread of the infection throughout the host nervous system. Together with the gE/gI heterodimer, US9 is involved in the sorting and transport of viral structural components toward axon tips. The sequence is that of Envelope protein US9 from Varicella-zoster virus (strain Dumas) (HHV-3).